The primary structure comprises 241 residues: Purine nucleoside phosphorylase DeoD-type 1 (241 aa).

A purine D-ribonucleoside is bound at residue histidine 5. Phosphate is bound by residues glycine 21, arginine 25, arginine 44, and 88-91 (RVGS). A purine D-ribonucleoside-binding positions include 180–182 (EME) and 204–205 (SD). Aspartate 205 acts as the Proton donor in catalysis.

The protein belongs to the PNP/UDP phosphorylase family. Homohexamer; trimer of homodimers.

The enzyme catalyses a purine D-ribonucleoside + phosphate = a purine nucleobase + alpha-D-ribose 1-phosphate. It carries out the reaction a purine 2'-deoxy-D-ribonucleoside + phosphate = a purine nucleobase + 2-deoxy-alpha-D-ribose 1-phosphate. In terms of biological role, catalyzes the reversible phosphorolytic breakdown of the N-glycosidic bond in the beta-(deoxy)ribonucleoside molecules, with the formation of the corresponding free purine bases and pentose-1-phosphate. This chain is Purine nucleoside phosphorylase DeoD-type 1, found in Photobacterium profundum (strain SS9).